We begin with the raw amino-acid sequence, 217 residues long: RNA chaperone ProQ (217 aa).

Positions 105-166 (EAKARVQAQR…PREEQHTPVS (62 aa)) are disordered. A compositionally biased stretch (basic residues) spans 121–131 (KRERKPRPTTP). Over residues 132–162 (RRKEGAERKPRAQKPVEKAPKTVKAPREEQH) the composition is skewed to basic and acidic residues.

Belongs to the ProQ family.

The protein localises to the cytoplasm. RNA chaperone with significant RNA binding, RNA strand exchange and RNA duplexing activities. May regulate ProP activity through an RNA-based, post-transcriptional mechanism. In Escherichia coli O8 (strain IAI1), this protein is RNA chaperone ProQ.